The sequence spans 326 residues: Transcription cofactor vestigial-like protein 3 (326 aa).

Residues 57 to 80 (VTLPSKQEEEDEEEEEEEKDQPAE) form a disordered region. Lys62 participates in a covalent cross-link: Glycyl lysine isopeptide (Lys-Gly) (interchain with G-Cter in SUMO2). A compositionally biased stretch (acidic residues) spans 64 to 75 (EEEDEEEEEEEK). Lys126 is covalently cross-linked (Glycyl lysine isopeptide (Lys-Gly) (interchain with G-Cter in SUMO2)). Disordered stretches follow at residues 175-203 (PPGTFSAADPSPWPGHNLHQTGPAPPPAV) and 233-256 (HAHMHHRHRHHHHHHHPPAGSALD). Residues 233-249 (HAHMHHRHRHHHHHHHP) show a composition bias toward basic residues.

The protein belongs to the vestigial family. As to expression, enriched in placenta.

The protein localises to the nucleus. Its function is as follows. May act as a specific coactivator for the mammalian TEFs. The sequence is that of Transcription cofactor vestigial-like protein 3 (VGLL3) from Homo sapiens (Human).